Reading from the N-terminus, the 403-residue chain is MNQRRAAGSTGVAYIRWLLRARPADYMLALSVAGGSLPVVGKHLKPLGGVTAIGVWGARHASDFLSATAKDLLTPGINEVRRRDRASTQEVSVAALRGIVSPDDLAVEWPAPERTPPVCGALRHRRYVHRRRVLYGDDPAQLLDVWRRKDMPTKPAPVLIFVPGGAWVHGSRAIQGYAVLSRLAAQGWVCLSIDYRVAPHHRWPRHILDVKTAIAWARANVDKFGGDRNFIAVAGCSAGGHLSALAGLTANDPQYQAELPEGSDTSVDAVVGIYGRYDWEDRSTPERARFVDFLERVVVQRTIDRHPEVFRDASPIQRVTRNAPPFLVIHGSRDCVIPVEQARSFVERLRAVSRSQVGYLELPGAGHGFDLLDGARTGPTAHAIALFLNQVHRSRAQFAKEVI.

Active-site residues include serine 237, aspartate 334, and histidine 367.

It belongs to the 'GDXG' lipolytic enzyme family.

The protein localises to the cell surface. It localises to the secreted. Its subcellular location is the cell wall. It is found in the capsule. The catalysed reaction is a fatty acid ester + H2O = an aliphatic alcohol + a fatty acid + H(+). It carries out the reaction a butanoate ester + H2O = an aliphatic alcohol + butanoate + H(+). It catalyses the reaction a hexanoate ester + H2O = an aliphatic alcohol + hexanoate + H(+). The enzyme catalyses an acetyl ester + H2O = an aliphatic alcohol + acetate + H(+). The catalysed reaction is an octanoate ester + H2O = an aliphatic alcohol + octanoate + H(+). It carries out the reaction decanoate ester + H2O = decanoate + an aliphatic alcohol + H(+). Its function is as follows. Esterase that can hydrolyze short-chain esters with the carbon chain containing 2 to 10 carbon atoms. Does not have lipase activity. Is highly immunogenic and elicits strong humoral immune responses in both HIV-negative (HIV-) and HIV-positive (HIV+) tuberculosis (TB) patients. Also elicits pro-inflammatory cytokine and chemokine responses from macrophages and pulmonary epithelial cells. May participate in the progression of active tuberculosis both by contributing to the utilization of lipid substrates for bacterial growth and replication, and by modulating immune responses. The sequence is that of Esterase LipC from Mycobacterium tuberculosis (strain ATCC 25618 / H37Rv).